The primary structure comprises 222 residues: Ribosomal RNA large subunit methyltransferase E (222 aa).

Residues Gly64, Trp66, Asp92, Asp108, and Asp133 each coordinate S-adenosyl-L-methionine. The active-site Proton acceptor is the Lys173.

It belongs to the class I-like SAM-binding methyltransferase superfamily. RNA methyltransferase RlmE family.

It is found in the cytoplasm. It carries out the reaction uridine(2552) in 23S rRNA + S-adenosyl-L-methionine = 2'-O-methyluridine(2552) in 23S rRNA + S-adenosyl-L-homocysteine + H(+). Functionally, specifically methylates the uridine in position 2552 of 23S rRNA at the 2'-O position of the ribose in the fully assembled 50S ribosomal subunit. This Variovorax paradoxus (strain S110) protein is Ribosomal RNA large subunit methyltransferase E.